Reading from the N-terminus, the 492-residue chain is Catalase isozyme 2 (492 aa).

Residues His65 and Asn138 contribute to the active site. Tyr348 contributes to the heme binding site.

It belongs to the catalase family. As to quaternary structure, homotetramer. It depends on heme as a cofactor.

The protein localises to the peroxisome. It catalyses the reaction 2 H2O2 = O2 + 2 H2O. Occurs in almost all aerobically respiring organisms and serves to protect cells from the toxic effects of hydrogen peroxide. The chain is Catalase isozyme 2 (CAT2) from Nicotiana plumbaginifolia (Leadwort-leaved tobacco).